Consider the following 251-residue polypeptide: Probable transcriptional regulatory protein CT1665 (251 aa).

The protein belongs to the TACO1 family.

Its subcellular location is the cytoplasm. The protein is Probable transcriptional regulatory protein CT1665 of Chlorobaculum tepidum (strain ATCC 49652 / DSM 12025 / NBRC 103806 / TLS) (Chlorobium tepidum).